The following is a 332-amino-acid chain: Glycerol-3-phosphate dehydrogenase [NAD(P)+] (332 aa).

Residues tryptophan 11, arginine 30, and lysine 108 each contribute to the NADPH site. Sn-glycerol 3-phosphate-binding residues include lysine 108, glycine 137, and serine 139. Position 141 (alanine 141) interacts with NADPH. Sn-glycerol 3-phosphate-binding residues include lysine 192, aspartate 245, serine 255, arginine 256, and asparagine 257. Lysine 192 (proton acceptor) is an active-site residue. Arginine 256 serves as a coordination point for NADPH. Residues valine 280 and glutamate 282 each contribute to the NADPH site.

Belongs to the NAD-dependent glycerol-3-phosphate dehydrogenase family.

It localises to the cytoplasm. The catalysed reaction is sn-glycerol 3-phosphate + NAD(+) = dihydroxyacetone phosphate + NADH + H(+). It catalyses the reaction sn-glycerol 3-phosphate + NADP(+) = dihydroxyacetone phosphate + NADPH + H(+). The protein operates within membrane lipid metabolism; glycerophospholipid metabolism. In terms of biological role, catalyzes the reduction of the glycolytic intermediate dihydroxyacetone phosphate (DHAP) to sn-glycerol 3-phosphate (G3P), the key precursor for phospholipid synthesis. The protein is Glycerol-3-phosphate dehydrogenase [NAD(P)+] of Burkholderia cenocepacia (strain HI2424).